Here is a 540-residue protein sequence, read N- to C-terminus: Probable metabolite transport protein YFL040W (540 aa).

At 1 to 29 (MTAMKAIVWRLPKMPKIKITKTYEVTKIT) the chain is on the cytoplasmic side. A helical membrane pass occupies residues 30 to 50 (AILTLVGFIMGLEVPSLATFL). Over 51 to 67 (TNKTFNEYFKYPTPLQQ) the chain is Extracellular. Asn52 carries N-linked (GlcNAc...) asparagine glycosylation. Residues 68–88 (GLLMGSTPLGGIMGCFICCIM) form a helical membrane-spanning segment. At 89–101 (NDRFSRIYQFQSG) the chain is on the cytoplasmic side. A helical transmembrane segment spans residues 102-122 (IIIWNIVTLLNFCIWDILGLL). Residues 123–126 (ICRM) lie on the Extracellular side of the membrane. The chain crosses the membrane as a helical span at residues 127–147 (IKGMILGNFSILVASYANEVI). At 148-158 (PRGKRGSTMSY) the chain is on the cytoplasmic side. A helical transmembrane segment spans residues 159-179 (IQLCLTIGILVMHYLCIALSL). Topologically, residues 180–187 (WDSHFAFR) are extracellular. A helical transmembrane segment spans residues 188–208 (IAWCIGIIPGLLFWMASYALP). Residues 209–275 (ESYHWLVLHG…KKLPRGSFKP (67 aa)) are Cytoplasmic-facing. A helical membrane pass occupies residues 276-296 (LILGMTLQLLVQFSGINIILG). Residues 297 to 313 (YITYICEIVGLEGNVKL) are Extracellular-facing. The chain crosses the membrane as a helical span at residues 314–334 (FTSSIPYFINMVLSLLPITFI). Residues 335–341 (DYTSRKL) lie on the Cytoplasmic side of the membrane. Residues 342 to 362 (ITLLGGFPISGLLITIGALFV) traverse the membrane as a helical segment. Residues 363-385 (KYGQDTKPIDGNRSLVWSIGENP) lie on the Extracellular side of the membrane. The N-linked (GlcNAc...) asparagine glycan is linked to Asn374. A helical membrane pass occupies residues 386–406 (FVGGWILTLCFLIVGIFAMSL). Residues 407–428 (SSIPWVYTNEMLPSRVKVKGFA) lie on the Cytoplasmic side of the membrane. The helical transmembrane segment at 429–449 (ICVTFGWLGNFILTFLCPVMI) threads the bilayer. The Extracellular portion of the chain corresponds to 450–455 (ERLKGT). Residues 456 to 476 (TFIIFGSLTFLISLSVLIWFP) traverse the membrane as a helical segment. Residues 477-540 (ETKGMSIEDI…KLKSDEEMII (64 aa)) lie on the Cytoplasmic side of the membrane. The segment at 499-540 (NLHGEKGIKTPDSNSNGGSTRSSQEGQLHKPIKLKSDEEMII) is disordered. Polar residues predominate over residues 509–524 (PDSNSNGGSTRSSQEG).

This sequence belongs to the major facilitator superfamily. Sugar transporter (TC 2.A.1.1) family.

The protein resides in the membrane. This is Probable metabolite transport protein YFL040W from Saccharomyces cerevisiae (strain ATCC 204508 / S288c) (Baker's yeast).